The following is a 130-amino-acid chain: uncharacterized protein (130 aa).

2 disordered regions span residues 1 to 47 (MTFY…QSNT) and 78 to 130 (QTLE…SESS). Positions 13–33 (QWKQLQTQQNKKNSPRPVTSS) are enriched in polar residues. A compositionally biased stretch (basic residues) spans 86–110 (PSKHKRKRTKYRRTKKSKHHSRKKT). Basic and acidic residues predominate over residues 117-130 (SERDSTTGRESESS).

This is an uncharacterized protein from Torque teno mini virus 1 (isolate TLMV-CBD279).